The following is a 213-amino-acid chain: Germin-like protein 8-14 (213 aa).

A signal peptide spans 1–23; the sequence is MAKAVMMLPVLLSFLLLPFSSMA. A disulfide bond links Cys29 and Cys44. The Cupin type-1 domain maps to 56 to 203; that stretch reads HGLAAAGNTS…VTFLDDAQVK (148 aa). N-linked (GlcNAc...) asparagine glycosylation is present at Asn63. Mn(2+)-binding residues include His104, His106, Glu111, and His151.

This sequence belongs to the germin family. Oligomer (believed to be a pentamer but probably hexamer). Phosphorylated on threonine residue.

It is found in the secreted. The protein localises to the extracellular space. The protein resides in the apoplast. Its function is as follows. May play a role in plant defense. Probably has no oxalate oxidase activity even if the active site is conserved. The protein is Germin-like protein 8-14 (GER5) of Oryza sativa subsp. japonica (Rice).